Consider the following 352-residue polypeptide: Selenide, water dikinase (352 aa).

The active site involves cysteine 23. Residues lysine 26 and 54–56 each bind ATP; that span reads SRD. Aspartate 57 lines the Mg(2+) pocket. ATP-binding positions include aspartate 74, aspartate 97, and 145-147; that span reads GHS. Aspartate 97 contributes to the Mg(2+) binding site. Aspartate 233 is a binding site for Mg(2+).

The protein belongs to the selenophosphate synthase 1 family. Class I subfamily. In terms of assembly, homodimer. It depends on Mg(2+) as a cofactor.

The catalysed reaction is hydrogenselenide + ATP + H2O = selenophosphate + AMP + phosphate + 2 H(+). Functionally, synthesizes selenophosphate from selenide and ATP. This chain is Selenide, water dikinase, found in Shewanella putrefaciens (strain CN-32 / ATCC BAA-453).